Reading from the N-terminus, the 333-residue chain is Glycerol-3-phosphate dehydrogenase [NAD(P)+] (333 aa).

NADPH is bound by residues Trp12, His31, and Lys105. The sn-glycerol 3-phosphate site is built by Lys105, Gly134, and Ser136. Ala138 contacts NADPH. Positions 189, 242, 252, 253, and 254 each coordinate sn-glycerol 3-phosphate. Lys189 acts as the Proton acceptor in catalysis. Residue Arg253 participates in NADPH binding. 2 residues coordinate NADPH: Val278 and Glu280.

This sequence belongs to the NAD-dependent glycerol-3-phosphate dehydrogenase family.

It localises to the cytoplasm. It catalyses the reaction sn-glycerol 3-phosphate + NAD(+) = dihydroxyacetone phosphate + NADH + H(+). The enzyme catalyses sn-glycerol 3-phosphate + NADP(+) = dihydroxyacetone phosphate + NADPH + H(+). It functions in the pathway membrane lipid metabolism; glycerophospholipid metabolism. Its function is as follows. Catalyzes the reduction of the glycolytic intermediate dihydroxyacetone phosphate (DHAP) to sn-glycerol 3-phosphate (G3P), the key precursor for phospholipid synthesis. The chain is Glycerol-3-phosphate dehydrogenase [NAD(P)+] from Brachyspira hyodysenteriae (strain ATCC 49526 / WA1).